A 141-amino-acid polypeptide reads, in one-letter code: 15 kDa lipoprotein (141 aa).

An N-terminal signal peptide occupies residues 1-17 (MVKRGRFALCLAVLLGA). The N-palmitoyl cysteine moiety is linked to residue Cys-18. Cys-18 is lipidated: S-diacylglycerol cysteine.

Its subcellular location is the cell membrane. The polypeptide is 15 kDa lipoprotein (tpp15) (Treponema pallidum (strain Nichols)).